The chain runs to 927 residues: Nuclear factor of activated T-cells, cytoplasmic 2 (927 aa).

A disordered region spans residues 1 to 29; that stretch reads MDVPEPQPDPDGGDGPGHEPGGSPQDELD. Phosphoserine is present on residues Ser23, Ser53, Ser54, Ser56, Ser99, Ser107, and Ser110. The segment at 111–116 is calcineurin-binding; sequence PRIEIT. The segment at 119–201 is transactivation domain A (TAD-A); sequence HELMQAGGAL…CVSPNNAGPD (83 aa). Residues Ser136, Ser150, Ser170, Ser173, Ser174, Ser176, Ser177, Ser179, and Ser182 each carry the phosphoserine modification. The required for cytoplasmic retention of the phosphorylated form stretch occupies residues 163 to 177; the sequence is YREPLCLSPASSGSS. 2 tandem repeats follow at residues 186–202 and 215–231. The segment at 186 to 292 is 3 X approximate SP repeats; it reads SPYTSPCVSP…PHVALQDDSI (107 aa). Disordered stretches follow at residues 203–299 and 322–341; these read LCPQ…YPPT and SKIWKTSPDPTPVSTAPSKA. Residues Ser215, Ser219, Ser223, Ser238, and Ser245 each carry the phosphoserine modification. Residues 216-226 are compositionally biased toward polar residues; it reads PRTSPIMSPRT. The short motif at 253 to 255 is the Nuclear localization signal element; it reads KRR. Phosphoserine occurs at positions 257, 270, 276, 278, 282, 328, and 365. The span at 267-277 shows a compositional bias: low complexity; that stretch reads PAASPQRSRSP. A 3; approximate repeat occupies 274–290; it reads SRSPSPQPSPHVALQDD. The RHD domain maps to 394–576; the sequence is ASLPPLEWPL…NPIECSQRSA (183 aa). Residues 423–430 mediate DNA binding; sequence RAHYETEG. A phosphoserine mark is found at Ser757, Ser759, and Ser761. Disordered stretches follow at residues 790-812 and 841-903; these read AGSQGQGQGSTLPHTSSASQQAS and FGPS…QNLD. Residues 798 to 812 are compositionally biased toward polar residues; sequence GSTLPHTSSASQQAS. Position 860 is a phosphoserine (Ser860).

Member of the multicomponent NFATC transcription complex that consists of at least two components, a pre-existing cytoplasmic component NFATC2 and an inducible nuclear component NFATC1. Other members such as NFATC4, NFATC3 or members of the activating protein-1 family, MAF, GATA4 and Cbp/p300 can also bind the complex. The phosphorylated form specifically interacts with XPO1; which mediates nuclear export. NFATC proteins bind to DNA as monomers. Interacts with NFATC2IP. Interacts with FOXP3. Interacts with TBX21 ('Thr-302' phosphorylated form). Interacts with KAT2A. Interacts with HOMER2 and HOMER3; this interaction competes with calcineurin/PPP3CA-binding and hence prevents NFATC2 dephosphorylation and activation. Interacts with protein phosphatase PPP3CA/calcineurin A. Interacts with AKAP5 (via leucine zipper domain); this is required for NFATC2/NFAT1 recruitment to CRAC channels. Post-translationally, in resting cells, phosphorylated by NFATC-kinase on at least 18 sites in the 99-365 region. Upon cell stimulation, all these sites except Ser-245 are dephosphorylated by calcineurin. Dephosphorylation induces a conformational change that simultaneously exposes an NLS and masks an NES, which results in nuclear localization. Simultaneously, one site among Ser-53; Ser-54 and Ser-56 is phosphorylated; which is required for full transcriptional activity. In terms of processing, ubiquitinated in endothelial cells by RNF213 downstream of the non-canonical Wnt signaling pathway, leading to its degradation by the proteasome. In terms of tissue distribution, expressed in spleen, heart, testis, brain, placenta, muscle and pancreas. Expressed in the thymus. Expressed in the lung. Expressed in cartilage.

Its subcellular location is the cytoplasm. It is found in the nucleus. Its function is as follows. Plays a role in the inducible expression of cytokine genes in T cells, especially in the induction of the IL-2, IL-3, IL-4, TNF-alpha or GM-CSF. Promotes invasive migration through the activation of GPC6 expression and WNT5A signaling pathway. Is involved in the negative regulation of chondrogenesis. Recruited by AKAP5 to ORAI1 pore-forming subunit of CRAC channels in Ca(2+) signaling microdomains where store-operated Ca(2+) influx is coupled to calmodulin and calcineurin signaling and activation of NFAT-dependent transcriptional responses. This chain is Nuclear factor of activated T-cells, cytoplasmic 2 (Nfatc2), found in Mus musculus (Mouse).